Consider the following 308-residue polypeptide: Maspardin (308 aa).

In terms of domain architecture, AB hydrolase-1 spans 87-159; that stretch reads FCDGFRKLLD…NSFWLMPAFM (73 aa). Ser-304 is modified (phosphoserine).

This sequence belongs to the AB hydrolase superfamily. In terms of assembly, interacts with CD4. Interacts with ALDH16A1. As to expression, expressed in cell lines FT.1 and in a L cell fibroblast derivative (at protein level).

It localises to the cytoplasm. Its function is as follows. May play a role as a negative regulatory factor in CD4-dependent T-cell activation. This Mus musculus (Mouse) protein is Maspardin (Spg21).